The primary structure comprises 120 residues: Large ribosomal subunit protein uL18 (120 aa).

It belongs to the universal ribosomal protein uL18 family. Part of the 50S ribosomal subunit; part of the 5S rRNA/L5/L18/L25 subcomplex. Contacts the 5S and 23S rRNAs.

In terms of biological role, this is one of the proteins that bind and probably mediate the attachment of the 5S RNA into the large ribosomal subunit, where it forms part of the central protuberance. The chain is Large ribosomal subunit protein uL18 from Bradyrhizobium sp. (strain BTAi1 / ATCC BAA-1182).